The following is a 680-amino-acid chain: Dipeptidyl carboxypeptidase (680 aa).

Residue H469 coordinates Zn(2+). E470 is a catalytic residue. Residues H473 and H476 each coordinate Zn(2+).

It belongs to the peptidase M3 family. Zn(2+) serves as cofactor.

It is found in the cytoplasm. The enzyme catalyses Hydrolysis of unblocked, C-terminal dipeptides from oligopeptides, with broad specificity. Does not hydrolyze bonds in which P1' is Pro, or both P1 and P1' are Gly.. In terms of biological role, removes dipeptides from the C-termini of N-blocked tripeptides, tetrapeptides and larger peptides. This chain is Dipeptidyl carboxypeptidase (dcp), found in Salmonella typhimurium (strain LT2 / SGSC1412 / ATCC 700720).